Reading from the N-terminus, the 116-residue chain is MKITPIHDNILVSLVESNKEEVSQKGIITALANPDKNESAHKGTVVALGAGPAYGKSEKPKYAFGIGDTIYFKEYSGISFEEEGTKYKIISLEDVLAFEKHGNTKTTTVKKGAKKK.

This sequence belongs to the GroES chaperonin family. Heptamer of 7 subunits arranged in a ring. Interacts with the chaperonin GroEL.

It is found in the cytoplasm. In terms of biological role, together with the chaperonin GroEL, plays an essential role in assisting protein folding. The GroEL-GroES system forms a nano-cage that allows encapsulation of the non-native substrate proteins and provides a physical environment optimized to promote and accelerate protein folding. GroES binds to the apical surface of the GroEL ring, thereby capping the opening of the GroEL channel. The protein is Co-chaperonin GroES of Mycoplasma pneumoniae (strain ATCC 29342 / M129 / Subtype 1) (Mycoplasmoides pneumoniae).